A 549-amino-acid polypeptide reads, in one-letter code: TBC1 domain family member 3I (549 aa).

The 193-residue stretch at 101 to 293 folds into the Rab-GAP TBC domain; sequence GMPMNIRGPM…RLWDVYLVEG (193 aa). 2 S-palmitoyl cysteine lipidation sites follow: Cys-318 and Cys-325. Disordered stretches follow at residues 350 to 443 and 507 to 526; these read LTRK…QGGP and AAPSTDSDQGTPFRARDEQQ. Residues 398-417 show a composition bias toward low complexity; sequence PRPIWSASPPRAPRSSTPCP.

In terms of processing, ubiquitinated by a CUL7-based E3 ligase, which leads to proteasomal degradation. Palmitoylation is required for membrane localization and protects TBC1D3 from ubiquitination.

The protein localises to the cell membrane. Its function is as follows. Acts as a GTPase activating protein for RAB5. Does not act on RAB4 or RAB11. The polypeptide is TBC1 domain family member 3I (Homo sapiens (Human)).